The chain runs to 885 residues: DNA replication licensing factor REC (885 aa).

The tract at residues 36–76 (RVIPAGGNRQPNQGEPGAPDAPSVPPATRQPRGWSRTAGKR) is disordered. The segment at 281–308 (CSRCQMEIAMRQRGTFQPRPYQCKRSEC) adopts a C4-type zinc-finger fold. Positions 430-627 (SFKLLVQSIA…ERDMSLTAHV (198 aa)) constitute an MCM domain. 473 to 480 (GDPGIGKT) contacts ATP. Positions 796–805 (SLKEGSSRQG) are enriched in polar residues. Residues 796–818 (SLKEGSSRQGTRGGGGAGGGAGK) form a disordered region. The span at 806–817 (TRGGGGAGGGAG) shows a compositional bias: gly residues.

The protein belongs to the MCM family.

It is found in the nucleus. In terms of biological role, required for meiotic DNA recombination in females. Probably not involved in DNA repair and recombination in somatic cells. This chain is DNA replication licensing factor REC (rec), found in Drosophila melanogaster (Fruit fly).